The sequence spans 273 residues: Ribosomal protein L11 methyltransferase (273 aa).

S-adenosyl-L-methionine is bound by residues Thr-112, Gly-133, Asp-155, and Asn-203.

Belongs to the methyltransferase superfamily. PrmA family.

The protein localises to the cytoplasm. The catalysed reaction is L-lysyl-[protein] + 3 S-adenosyl-L-methionine = N(6),N(6),N(6)-trimethyl-L-lysyl-[protein] + 3 S-adenosyl-L-homocysteine + 3 H(+). Its function is as follows. Methylates ribosomal protein L11. The protein is Ribosomal protein L11 methyltransferase of Deinococcus radiodurans (strain ATCC 13939 / DSM 20539 / JCM 16871 / CCUG 27074 / LMG 4051 / NBRC 15346 / NCIMB 9279 / VKM B-1422 / R1).